We begin with the raw amino-acid sequence, 575 residues long: Sodium/calcium exchanger NCL2 (575 aa).

3 consecutive transmembrane segments (helical) span residues 69-89, 112-132, and 146-166; these read FLPC…YGFL, IVGG…LILV, and VLIG…LLWG. The N-linked (GlcNAc...) asparagine glycan is linked to N179. The next 2 helical transmembrane spans lie at 210–230 and 237–257; these read IMAI…FKLH and VLIG…YQVF. 2 consecutive EF-hand domains span residues 297 to 332 and 337 to 372; these read PNVS…INFE and NSNL…WLDE. An N-linked (GlcNAc...) asparagine glycan is attached at N298. Residues D310, D312, D314, K316, E321, D350, S352, N354, and E361 each contribute to the Ca(2+) site. 5 consecutive transmembrane segments (helical) span residues 417-437, 457-477, 494-514, 522-542, and 548-568; these read WTCI…AASA, FISF…SAII, VYGG…ALVY, FSSE…FTSF, and LWTC…VYIL.

This sequence belongs to the Ca(2+):cation antiporter (CaCA) (TC 2.A.19) family.

The protein localises to the cell membrane. Its function is as follows. May function as a sodium/calcium exchanger (NCX) and participate in the maintenance of calcium homeostasis. May play a role abiotic stress responses. This chain is Sodium/calcium exchanger NCL2, found in Oryza sativa subsp. japonica (Rice).